Consider the following 110-residue polypeptide: UPF0122 protein Sca_0859 (110 aa).

The protein belongs to the UPF0122 family.

Its function is as follows. Might take part in the signal recognition particle (SRP) pathway. This is inferred from the conservation of its genetic proximity to ftsY/ffh. May be a regulatory protein. The chain is UPF0122 protein Sca_0859 from Staphylococcus carnosus (strain TM300).